Reading from the N-terminus, the 481-residue chain is Proline--tRNA ligase (481 aa).

This sequence belongs to the class-II aminoacyl-tRNA synthetase family. ProS type 3 subfamily. In terms of assembly, homodimer.

It localises to the cytoplasm. The catalysed reaction is tRNA(Pro) + L-proline + ATP = L-prolyl-tRNA(Pro) + AMP + diphosphate. Catalyzes the attachment of proline to tRNA(Pro) in a two-step reaction: proline is first activated by ATP to form Pro-AMP and then transferred to the acceptor end of tRNA(Pro). In Chlorobium luteolum (strain DSM 273 / BCRC 81028 / 2530) (Pelodictyon luteolum), this protein is Proline--tRNA ligase.